A 224-amino-acid chain; its full sequence is dTDP-fucosamine acetyltransferase (224 aa).

The N-acetyltransferase domain occupies 94–224 (PALRQLASAA…VESTAYWLYR (131 aa)). Residues 168-174 (LAGRGAG), Asn201, and Arg207 each bind acetyl-CoA. The active-site Proton donor is Tyr208.

This sequence belongs to the WecD family. Homodimer.

The enzyme catalyses dTDP-4-amino-4,6-dideoxy-alpha-D-galactose + acetyl-CoA = dTDP-4-acetamido-4,6-dideoxy-alpha-D-galactose + CoA + H(+). It functions in the pathway bacterial outer membrane biogenesis; enterobacterial common antigen biosynthesis. Catalyzes the acetylation of dTDP-fucosamine (dTDP-4-amino-4,6-dideoxy-D-galactose) to dTDP-Fuc4NAc, which is utilized in the biosynthesis of the enterobacterial common antigen (ECA). The polypeptide is dTDP-fucosamine acetyltransferase (Escherichia coli O6:H1 (strain CFT073 / ATCC 700928 / UPEC)).